A 254-amino-acid polypeptide reads, in one-letter code: Ribonuclease 3 (254 aa).

Positions 24-154 constitute an RNase III domain; it reads LRRLQETLGV…VIGALFLDSG (131 aa). Glutamate 67 lines the Mg(2+) pocket. Aspartate 71 is a catalytic residue. Mg(2+)-binding residues include aspartate 140 and glutamate 143. Residue glutamate 143 is part of the active site. The 70-residue stretch at 181–250 folds into the DRBM domain; sequence DYKSTLQVLA…ARLAWEQLSG (70 aa).

This sequence belongs to the ribonuclease III family. Homodimer. The cofactor is Mg(2+).

The protein resides in the cytoplasm. The catalysed reaction is Endonucleolytic cleavage to 5'-phosphomonoester.. Its function is as follows. Digests double-stranded RNA. Involved in the processing of primary rRNA transcript to yield the immediate precursors to the large and small rRNAs (23S and 16S). Processes some mRNAs, and tRNAs when they are encoded in the rRNA operon. Processes pre-crRNA and tracrRNA of type II CRISPR loci if present in the organism. The polypeptide is Ribonuclease 3 (Treponema pallidum (strain Nichols)).